A 520-amino-acid chain; its full sequence is Probable alginate O-acetylase AlgI (520 aa).

Helical transmembrane passes span 7-24 (VFLF…YLSG), 39-61 (FYAW…NYWI), 78-100 (WLIL…NFGV), 115-137 (FVLT…ISYI), 150-172 (NLID…VLRF), 239-261 (LYFD…GFRF), 311-333 (LFLT…IWGA), 353-375 (VLNP…IFRA), 402-424 (ANLT…FFGL), and 483-505 (WLSQ…ASVL). Histidine 322 is an active-site residue.

It belongs to the membrane-bound acyltransferase family.

Its subcellular location is the cell inner membrane. It functions in the pathway glycan biosynthesis; alginate biosynthesis. Together with AlgJ and AlgF, forms an inner membrane complex which probably interacts with the alginate polymerization-transport complex and adds acetyl groups at the O-2 and O-3 positions of mannuronate residues. Acetylation of alginate is important for the architecture of biofilms and increases resistance to opsonic killing in the host. The protein is Probable alginate O-acetylase AlgI (algI) of Pseudomonas aeruginosa (strain ATCC 15692 / DSM 22644 / CIP 104116 / JCM 14847 / LMG 12228 / 1C / PRS 101 / PAO1).